A 420-amino-acid chain; its full sequence is Serine/threonine-protein kinase PCRK2 (420 aa).

The disordered stretch occupies residues 1-64 (MKCFLFPLGD…SNTSMSAREN (64 aa)). The span at 22–36 (SPTSNFSDVNKSGSD) shows a compositional bias: polar residues. A compositionally biased stretch (low complexity) spans 42–58 (VSGTSTVSSTGRNSNTS). Phosphothreonine is present on T70. Residues 81–366 (FSRSGMIGEG…EVLEMVTKIV (286 aa)) form the Protein kinase domain. Residues 87 to 95 (IGEGGFGCV) and K115 each bind ATP. Y164 is subject to Phosphotyrosine. Catalysis depends on D215, which acts as the Proton acceptor. A phosphoserine mark is found at S219 and S249. Phosphothreonine is present on residues T250 and T255. At Y263 the chain carries Phosphotyrosine. Positions 369–396 (SSPGNGGKKPQLVPLKSQETSRVEEGKN) are disordered. The span at 387–396 (ETSRVEEGKN) shows a compositional bias: basic and acidic residues.

This sequence belongs to the protein kinase superfamily. Ser/Thr protein kinase family. Interacts with FLS2.

It localises to the cell membrane. It carries out the reaction L-seryl-[protein] + ATP = O-phospho-L-seryl-[protein] + ADP + H(+). The enzyme catalyses L-threonyl-[protein] + ATP = O-phospho-L-threonyl-[protein] + ADP + H(+). Functions redundantly with PCRK1 in basal resistance against bacterial pathogens and in regulation of plant immunity. Functions together with PCRK1 downstream of the pathogen-associated molecular pattern (PAMP) receptor FLS2. Contributes to the induction of SARD1 and CBP60G, which are transcriptional activator of ICS1, an enzyme involved in salicylate (SA) biosynthesis upon pathogen attack. The polypeptide is Serine/threonine-protein kinase PCRK2 (Arabidopsis thaliana (Mouse-ear cress)).